A 471-amino-acid polypeptide reads, in one-letter code: MYTYMEYLQKCFYKTTNWNEDNIFSNITATSSALLEFPIPNGCKVDLSSKATEHSASSFTLSNYHSINGSLAYLYSSIPLRNTMGTKDISLQDAISGFKMLELNSSTTNALQNPVYKNTHDSLLYGRMYFPGSALEAMIIKRISPQTQLLIKCINNPHLDKNGTMIVYLQKNAPKLSREFIYSTNEALFGFRCLYNMGSSESNLNRSINNSNLIPKFDNSVISIGTEIWYAALSMSPGLSTAFRYSTRSTSTGKPLTMTFACNPILGHISSAYTVKTSVASTFCSKYDFNVFSYASNLSLGFEIYNYSSSNTSNSAATPPRIKNSDSQVLSNNSTDSKGTVHIRSPDVLDYKNHSNVIISPIQTFDNYYHINPTLLPSTKNEFEEVRPPPLESQVDSNNETAMTAFENLVNESDFSSVIKLSTSLNDKMLKLLWKGRCKDFLVTTGVKMILNPITNTPEFNRFGISFSYAC.

Residues 313–338 are disordered; it reads SNSAATPPRIKNSDSQVLSNNSTDSK. Polar residues predominate over residues 325–338; sequence SDSQVLSNNSTDSK.

Belongs to the MDM10 family. In terms of assembly, component of the ER-mitochondria encounter structure (ERMES) or MDM complex, composed of MMM1, MDM10, MDM12 and MDM34. Associates with the mitochondrial outer membrane sorting assembly machinery SAM(core) complex.

Its subcellular location is the mitochondrion outer membrane. Functionally, component of the ERMES/MDM complex, which serves as a molecular tether to connect the endoplasmic reticulum and mitochondria. Components of this complex are involved in the control of mitochondrial shape and protein biogenesis and may function in phospholipid exchange. MDM10 is involved in the late assembly steps of the general translocase of the mitochondrial outer membrane (TOM complex). Functions in the TOM40-specific route of the assembly of outer membrane beta-barrel proteins, including the association of TOM40 with the receptor TOM22 and small TOM proteins. Can associate with the SAM(core) complex as well as the MDM12-MMM1 complex, both involved in late steps of the major beta-barrel assembly pathway, that is responsible for biogenesis of all outer membrane beta-barrel proteins. May act as a switch that shuttles between both complexes and channels precursor proteins into the TOM40-specific pathway. Plays a role in mitochondrial morphology and in the inheritance of mitochondria. The protein is Mitochondrial distribution and morphology protein 10 of Debaryomyces hansenii (strain ATCC 36239 / CBS 767 / BCRC 21394 / JCM 1990 / NBRC 0083 / IGC 2968) (Yeast).